Consider the following 150-residue polypeptide: UPF0756 membrane protein NTHI1233 (150 aa).

Helical transmembrane passes span 1 to 21 (MTLQLNTIALLLVILLILGVL), 52 to 72 (YGVKIGIIILTIGVLSPLVSG), 81 to 101 (GFLSWKMALSIAVGVLVAWLA), and 123 to 143 (IIGVAFLGGIPVGPLIAAGIL).

It belongs to the UPF0756 family.

The protein resides in the cell membrane. The polypeptide is UPF0756 membrane protein NTHI1233 (Haemophilus influenzae (strain 86-028NP)).